Consider the following 304-residue polypeptide: E3 ubiquitin-protein ligase BOI (304 aa).

The interval 178–214 (LQERVKSLYVENQIWRDIAQTNEANANTLRTNLDQVL) is WRD domain. The stretch at 197–220 (QTNEANANTLRTNLDQVLAQLETF) forms a coiled coil. The segment at 254-291 (CKRCGEREASVLVLPCRHLCLCTVCGGSALLRTCPVCD) adopts an RING-type zinc-finger fold.

Interacts with MYB108/BOS1 and the DELLA proteins GAI, RGA, RGL1, RGL2 and RGL3. In terms of tissue distribution, expressed in leaves, siliques, roots, flowering tissues and stigma tips.

Its subcellular location is the nucleus. The enzyme catalyses S-ubiquitinyl-[E2 ubiquitin-conjugating enzyme]-L-cysteine + [acceptor protein]-L-lysine = [E2 ubiquitin-conjugating enzyme]-L-cysteine + N(6)-ubiquitinyl-[acceptor protein]-L-lysine.. It participates in protein degradation; proteasomal ubiquitin-dependent pathway. In terms of biological role, E3 ubiquitin-protein ligase involved in the regulation of pathogen and abiotic stress responses by facilitating degradation of MYB108/BOI. Attenuates cell death by preventing caspase activation. Has no effect on the stability of the DELLA proteins. Not regulated by MYB108/BOI. The chain is E3 ubiquitin-protein ligase BOI (BOI) from Arabidopsis thaliana (Mouse-ear cress).